The sequence spans 542 residues: Putative cysteine ligase BshC (542 aa).

Positions 458–487 (VAKNAAILQAQIEFLQHALERALLRKHETE) form a coiled coil.

This sequence belongs to the BshC family.

In terms of biological role, involved in bacillithiol (BSH) biosynthesis. May catalyze the last step of the pathway, the addition of cysteine to glucosamine malate (GlcN-Mal) to generate BSH. The chain is Putative cysteine ligase BshC from Geobacillus kaustophilus (strain HTA426).